The sequence spans 804 residues: Cas scaffolding protein family member 4 (804 aa).

Residues 11 to 73 (PKTLLARALY…PANRLQVLRE (63 aa)) enclose the SH3 domain. Ser-200 and Ser-297 each carry phosphoserine. 3 disordered regions span residues 369–395 (LERGREAPENSPWISGQTSFLSPDSDR), 607–628 (QRETESYQESSPFDRQPTTEHS), and 642–686 (QQSP…TERK). Positions 380–390 (PWISGQTSFLS) are enriched in polar residues. A compositionally biased stretch (basic and acidic residues) spans 649-664 (EKGKPTMEGKSNRNPD).

It belongs to the CAS family. Interacts (via SH3 domain) with PTK2/FAK1 (via C-terminus). Post-translationally, phosphorylated on tyrosines by SRC.

Its subcellular location is the cytoplasm. The protein resides in the cytoskeleton. The protein localises to the cell junction. It localises to the focal adhesion. In terms of biological role, docking protein that plays a role in tyrosine kinase-based signaling related to cell adhesion and cell spreading. Regulates PTK2/FAK1 activity, focal adhesion integrity, and cell spreading. The sequence is that of Cas scaffolding protein family member 4 from Mus musculus (Mouse).